We begin with the raw amino-acid sequence, 334 residues long: Zinc-finger homeodomain protein 10 (334 aa).

The span at 1-15 shows a compositional bias: low complexity; it reads MMDMTPTITTTTTPT. Disordered stretches follow at residues 1-33 and 103-164; these read MMDM…QPAK and FHRR…LLSL. The ZF-HD dimerization-type; degenerate zinc finger occupies 56–107; it reads YKECLKNHAAALGGHALDGCGEFMPSPSSISSDPTSLKCAACGCHRNFHRRD. Positions 136 to 155 are enriched in pro residues; the sequence is PPPPPPPPPRSPNSASPPPI. A DNA-binding region (homeobox) is located at residues 200–263; the sequence is RKRFRTKFSQ…NNKNTFNRRD (64 aa). The segment at 292–334 is disordered; the sequence is NGHHGVGGGGELHQSVSSGGGGGGFDSDSGGANGGNVNGSSSS. Over residues 309–328 the composition is skewed to gly residues; that stretch reads SGGGGGGFDSDSGGANGGNV.

As to quaternary structure, homo- and heterodimer with other ZFHD proteins. Interacts with MIF1, MIF2 and MIF3; these interactions prevent nuclear localization and DNA-binding to inhibit transcription regulation activity. Binds to ZHD1, ZHD2, ZHD4, ZHD5, ZHD6, ZHD7 and ZHD8. Interacts with KIN10 and KIN11. As to expression, mostly expressed in rosettes (e.g. young leaves), flowers (e.g. styles), siliques and inflorescence.

It is found in the nucleus. In terms of biological role, putative transcription factor. Probably involved in establishing polarity during leaf development through the gibberellic acid (GA) signaling pathway. This Arabidopsis thaliana (Mouse-ear cress) protein is Zinc-finger homeodomain protein 10 (ZHD10).